The sequence spans 611 residues: Dolabella-3,7-dien-18-ol synthase TPS06 (611 aa).

Mg(2+) is bound by residues Asp-363, Asp-367, Asp-507, Thr-511, and Glu-515. A DDXXD motif; degenerate motif is present at residues 363 to 367 (DNTFD).

It belongs to the terpene synthase family. Tpsa subfamily. The cofactor is Mg(2+). Mn(2+) is required as a cofactor. As to expression, predominantly expressed in flowers but also in stems, siliques, roots and leaves.

It localises to the cytoplasm. It carries out the reaction (2E,6E,10E)-geranylgeranyl diphosphate + H2O = (3E,7E)-dolabella-3,7-dien-18-ol + diphosphate. It functions in the pathway secondary metabolite biosynthesis; terpenoid biosynthesis. Functionally, involved in terpene biosynthesis in roots. Possesses sesquiterpene (C15) synthase activity and diterpene (C20) synthase activity in vitro. Possesses dolabella-3,7-dien-18-ol synthase activity in vitro. Catalyzes the formation of dolabella-3,7-dien-18-ol from geranylgeranyl diphosphate. This is Dolabella-3,7-dien-18-ol synthase TPS06 from Arabidopsis thaliana (Mouse-ear cress).